A 185-amino-acid chain; its full sequence is Small ribosomal subunit protein uS4c (185 aa).

The 63-residue stretch at 72–134 (MRLDNVIFRL…PTSCNALKGE (63 aa)) folds into the S4 RNA-binding domain. Residues 132-154 (KGESPGGGETPDHLTASLSEGSR) are disordered.

It belongs to the universal ribosomal protein uS4 family. In terms of assembly, part of the 30S ribosomal subunit. Contacts protein S5. The interaction surface between S4 and S5 is involved in control of translational fidelity.

The protein localises to the plastid. Its subcellular location is the chloroplast. Its function is as follows. One of the primary rRNA binding proteins, it binds directly to 16S rRNA where it nucleates assembly of the body of the 30S subunit. With S5 and S12 plays an important role in translational accuracy. The protein is Small ribosomal subunit protein uS4c (rps4) of Woodwardia unigemmata (Chainfern).